Here is a 434-residue protein sequence, read N- to C-terminus: Prenyltransferase penG (434 aa).

2 stretches are compositionally biased toward polar residues: residues 1 to 14 and 21 to 35; these read MTQD…QTAG and THSN…PSTW. The interval 1 to 35 is disordered; sequence MTQDVVTVSSQTAGTIKESGTHSNPDNKTTSPSTW. L-tryptophan is bound by residues 104–105 and Glu108; that span reads EI. Positions 122, 208, 275, 277, 279, and 348 each coordinate substrate.

This sequence belongs to the tryptophan dimethylallyltransferase family.

The catalysed reaction is yaequinolone E + dimethylallyl diphosphate + H2O = [(1'E)-3'-hydroxy-3',7'-dimethylocta-1',6'-dien-1'-yl]-quinolinone B + diphosphate. Its pathway is secondary metabolite biosynthesis. It participates in alkaloid biosynthesis. The protein operates within mycotoxin biosynthesis. In terms of biological role, prenyltransferase; part of the gene cluster that mediates the biosynthesis of penigequinolones, potent insecticidal alkaloids that contain a highly modified 10-carbon prenyl group. The first stage is catalyzed by the nonribosomal peptide synthetase penN that condenses anthranilic acid and O-methyl-L-tyrosine to produce 4'-methoxycyclopeptin. 4'-methoxycyclopeptin is then converted to 4'-methoxydehydrocyclopeptin by the ketoglutarate-dependent dioxygenase penM through dehydrogenation to form a double bond between C-alpha and C-beta of the O-methyltyrosine side chain. PenM also converts its first product methoxydehydrocyclopeptin to 4'-methoxycyclopenin. The following conversion of 4'methoxycyclopenin into 4'-methoxyviridicatin is catalyzed by the cyclopenase penL. 4'-methoxyviridicatin is the precursor of quinolone natural products, and is further converted to quinolinone B. The prenyltransferase penI then catalyzes the canonical Friedel-Crafts alkylation of quinolinone B with dimethylallyl cation to yield dimethylallyl quinolone, which is subjected to FAD-dependent dehydrogenation by the FAD-linked oxidoreductase penH to yield conjugated aryl diene. The delta(3') double bond then serves as the site of the second alkylation with DMAPP catalyzed by the prenyltransferase penG to yield a carbenium ion intermediate, which can be attacked by H(2)O to yield a styrenyl quinolone containing a C3'-hydroxyprenyl chain, or undergo cyclization to yield yaequinolones J1 and J2. The conversion of the styrenyl quinolone into the tetrahydrofuran-containing yaequinolone C is performed by the FAD-dependent monooxygenase penE and involves epoxidation of the terminal C7'-C8' olefin, followed by epoxide ring opening initiated by the C3' hydroxyl group. The predicted cysteine hydrolase penJ acts as an epoxide hydrolase that enhances the rate of the 5-exo-tet cyclization step, increasing the yield of yaequinolone C. PenF catalyzes the cationic rearrangement of the epoxide formed by penE (before ring opening to produce yaequinolone C) into yaequinolone D. Finally, the short-chain dehydrogenase/reductase (SDR)-like reductase penD, catalyzes both the dehydration of yaequinolone D and the reduction of the resulting oxonium to yield penigequinolone. This is Prenyltransferase penG from Penicillium thymicola.